The chain runs to 146 residues: Hemoglobin subunit beta (146 aa).

The 145-residue stretch at 2 to 146 (HWTAEEKSAI…VAHALAHQYH (145 aa)) folds into the Globin domain. Residues histidine 63 and histidine 92 each contribute to the heme b site.

The protein belongs to the globin family. As to quaternary structure, heterotetramer of two alpha chains and two beta chains. Oxygenation results in dissociation to dimers. In terms of tissue distribution, red blood cells.

Its function is as follows. Involved in oxygen transport from the lung to the various peripheral tissues. The sequence is that of Hemoglobin subunit beta (HBB) from Erythrolamprus miliaris (South American water snake).